A 207-amino-acid polypeptide reads, in one-letter code: Ras-related protein Rab7 (207 aa).

Residues 15 to 22 (GDSGVGKT), 63 to 67 (DTAGQ), and 125 to 128 (NKID) contribute to the GTP site. S-geranylgeranyl cysteine attachment occurs at residues Cys-205 and Cys-207. Cys-207 carries the cysteine methyl ester modification.

This sequence belongs to the small GTPase superfamily. Rab family.

The protein resides in the cell membrane. In terms of biological role, protein transport. Probably involved in vesicular traffic. The sequence is that of Ras-related protein Rab7 from Prunus armeniaca (Apricot).